Reading from the N-terminus, the 244-residue chain is L-xylulose reductase (244 aa).

Residue Met-1 is modified to N-acetylmethionine. An NADP(+)-binding site is contributed by 11-39 (LVTGAGKGIGRSTVLALKAAGAQVVAVSR). Arg-21 carries the post-translational modification Omega-N-methylarginine. Residue Ser-136 coordinates substrate. The active-site Proton acceptor is Tyr-149. Residue Lys-153 is part of the active site.

It belongs to the short-chain dehydrogenases/reductases (SDR) family. As to quaternary structure, homotetramer. As to expression, highly expressed in kidney, liver and epididymis. Expressed at intermediate level in lung. Weakly or not expressed in brain, heart, spleen and testis.

The protein localises to the membrane. It localises to the apical cell membrane. It catalyses the reaction xylitol + NADP(+) = L-xylulose + NADPH + H(+). Catalyzes the NADPH-dependent reduction of several pentoses, tetroses, trioses, alpha-dicarbonyl compounds and L-xylulose. Participates in the uronate cycle of glucose metabolism. May play a role in the water absorption and cellular osmoregulation in the proximal renal tubules by producing xylitol, an osmolyte, thereby preventing osmolytic stress from occurring in the renal tubules. The polypeptide is L-xylulose reductase (Dcxr) (Mus musculus (Mouse)).